The following is a 415-amino-acid chain: Amino acid decarboxylase lolD2 (415 aa).

Position 62 is an N6-(pyridoxal phosphate)lysine (Lys62). Pyridoxal 5'-phosphate-binding positions include Ser194, Gly231, and 266–269 (EPGT). 315–316 (IV) contacts substrate. Cys351 acts as the Proton donor; shared with dimeric partner in catalysis. Residue Cys351 is modified to S-nitrosocysteine. Position 352 (Asp352) interacts with substrate. Position 381 (Tyr381) interacts with pyridoxal 5'-phosphate.

Belongs to the Orn/Lys/Arg decarboxylase class-II family. In terms of assembly, homodimer. Pyridoxal 5'-phosphate is required as a cofactor.

It functions in the pathway alkaloid biosynthesis. Functionally, amino acid decarboxylase; part of the gene cluster that mediates the biosynthesis of loline alkaloids, potent insecticidal agents composed of a pyrrolizidine ring system and an uncommon ether bridge linking carbons 2 and 7. Lolines are structurally differentiated by the various modifications of the L-amino group and include norloline, loline, N-methylloline, N-acetylloline, N-acetylnorloline, and N-formylloline. The first committed step is the condensation of O-acetyl-L-homoserine (derived from L-aspartic acid) and L-proline, probably catalyzed by the gamma-type pyridoxal 5'-phosphate(PLP)-dependent enzyme lolC, to give the diamino diacid, NACPP. Ensuing cyclization, decarboxylation, and acetylation steps yield 1-exo-acetamidopyrrolizidine (AcAP). LolO is required for installation of the ether bridge upon the pathway intermediate, 1-exo-acetamidopyrrolizidine (AcAP). In sequential 2-oxoglutarate- and O(2)-consuming steps, lolO removes hydrogens from C2 and C7 of AcAP to form both carbon-oxygen bonds in N-acetylnorloline (NANL), the precursor to all other lolines. The enzymes lolD, lolE, lolF and lolT have also been proposed to be involved in the ether-bridge installation. Further processing of the exocyclic moiety of NANL by fungal N-acetamidase (LolN), methyltransferase (LolM), and cytochrome P450 (LolP) enzymes, with occasional involvement of a plant acetyltransferase, generates the other known lolines. LolN transforms NANL to norlonine which is monomethylated and dimethylated to respectively lonine and N-methyllonine (NML) by lolM. LolP catalyzes hydroxylation of the methyl group in N-methylloline (NML) and further oxygenation to N-formylloline (NFL). A plant acetyltransferase is responsible for the acetylation of loline to form N-acetylloline (NAL). LolA might interact with aspartate kinase to prevent feedback inhibition of its activity by these end products and thereby promote production of L-homoserine from L-aspartate. In Epichloe uncinata (Endophyte fungus), this protein is Amino acid decarboxylase lolD2.